Consider the following 136-residue polypeptide: Ribonuclease P protein component (136 aa).

It belongs to the RnpA family. In terms of assembly, consists of a catalytic RNA component (M1 or rnpB) and a protein subunit.

It catalyses the reaction Endonucleolytic cleavage of RNA, removing 5'-extranucleotides from tRNA precursor.. Functionally, RNaseP catalyzes the removal of the 5'-leader sequence from pre-tRNA to produce the mature 5'-terminus. It can also cleave other RNA substrates such as 4.5S RNA. The protein component plays an auxiliary but essential role in vivo by binding to the 5'-leader sequence and broadening the substrate specificity of the ribozyme. This chain is Ribonuclease P protein component, found in Burkholderia mallei (strain NCTC 10247).